Here is a 192-residue protein sequence, read N- to C-terminus: UPF0312 protein Spro_1887 (192 aa).

The signal sequence occupies residues 1 to 23 (MLKKTVLGLTAGAMLLSAGSALA).

The protein belongs to the UPF0312 family. Type 1 subfamily.

The protein localises to the periplasm. This Serratia proteamaculans (strain 568) protein is UPF0312 protein Spro_1887.